The sequence spans 197 residues: Ribosomal RNA large subunit methyltransferase E (197 aa).

The S-adenosyl-L-methionine site is built by glycine 50, tryptophan 52, aspartate 70, aspartate 88, and aspartate 111. The Proton acceptor role is filled by lysine 151.

It belongs to the class I-like SAM-binding methyltransferase superfamily. RNA methyltransferase RlmE family.

It is found in the cytoplasm. The catalysed reaction is uridine(2552) in 23S rRNA + S-adenosyl-L-methionine = 2'-O-methyluridine(2552) in 23S rRNA + S-adenosyl-L-homocysteine + H(+). Functionally, specifically methylates the uridine in position 2552 of 23S rRNA at the 2'-O position of the ribose in the fully assembled 50S ribosomal subunit. This is Ribosomal RNA large subunit methyltransferase E from Syntrophobacter fumaroxidans (strain DSM 10017 / MPOB).